We begin with the raw amino-acid sequence, 346 residues long: Proto-oncogene serine/threonine-protein kinase mos (346 aa).

A Protein kinase domain is found at 60 to 341; that stretch reads VCLLQRLGAG…RPLLVDLTSL (282 aa). ATP-binding positions include 66–74 and lysine 87; that span reads LGAGGFGSV. Aspartate 201 serves as the catalytic Proton acceptor.

It belongs to the protein kinase superfamily. Ser/Thr protein kinase family.

It catalyses the reaction L-seryl-[protein] + ATP = O-phospho-L-seryl-[protein] + ADP + H(+). The enzyme catalyses L-threonyl-[protein] + ATP = O-phospho-L-threonyl-[protein] + ADP + H(+). This Chlorocebus aethiops (Green monkey) protein is Proto-oncogene serine/threonine-protein kinase mos.